A 465-amino-acid chain; its full sequence is Cruciferin CRU4 (465 aa).

A signal peptide spans 1 to 22 (MGPTSLLSFFFTFLTLFHGFTA). Cystine bridges form between C29/C62 and C105/C283. Cupin type-1 domains follow at residues 34–236 (LNAL…ETAQ) and 289–438 (ENLD…QEAR). Position 108 is a phosphothreonine (T108). Residues 112 to 135 (SPVFGQGQGQEQGQGQGQGQGQGF) are disordered. Residues 117–133 (QGQGQEQGQGQGQGQGQ) are compositionally biased toward gly residues. Phosphotyrosine is present on Y306. Phosphoserine is present on residues S308 and S443.

It belongs to the 11S seed storage protein (globulins) family. Heterohexamer; each subunit is composed of an acidic and a basic chain derived from a single precursor and linked by a disulfide bond.

The protein resides in the rough endoplasmic reticulum. In terms of biological role, this is a seed storage protein. The chain is Cruciferin CRU4 (CRU4) from Brassica napus (Rape).